Reading from the N-terminus, the 309-residue chain is tRNA dimethylallyltransferase (309 aa).

15–22 serves as a coordination point for ATP; the sequence is GPTASGKS. A substrate-binding site is contributed by 17–22; that stretch reads TASGKS. Positions 40-43 are interaction with substrate tRNA; the sequence is DSRQ.

The protein belongs to the IPP transferase family. In terms of assembly, monomer. Mg(2+) serves as cofactor.

It catalyses the reaction adenosine(37) in tRNA + dimethylallyl diphosphate = N(6)-dimethylallyladenosine(37) in tRNA + diphosphate. Its function is as follows. Catalyzes the transfer of a dimethylallyl group onto the adenine at position 37 in tRNAs that read codons beginning with uridine, leading to the formation of N6-(dimethylallyl)adenosine (i(6)A). The sequence is that of tRNA dimethylallyltransferase from Chlorobium phaeovibrioides (strain DSM 265 / 1930) (Prosthecochloris vibrioformis (strain DSM 265)).